Consider the following 126-residue polypeptide: FCS-Like Zinc finger 7 (126 aa).

Residues 72-116 form an FLZ-type zinc finger; sequence SFLVNCGFCKRGLAPGRDIYMYKGDAAFCSIECREQQMEHDEGKT.

It belongs to the FLZ family. Interacts with KIN10 and KIN11 via its FLZ-type zinc finger domain. Interacts with KINB3 via its N-terminal part. Forms homodimer and heterodimer with FLZ1, FLZ2 and FLZ15 in vitro.

It localises to the cytoplasm. The protein resides in the nucleus. Its function is as follows. May act as an adapter to facilitate the interaction of SnRK1 complex with effector proteins, conferring tissue- and stimulus-type specific differences in the SnRK1 regulation pathway. The sequence is that of FCS-Like Zinc finger 7 from Arabidopsis thaliana (Mouse-ear cress).